The primary structure comprises 416 residues: Serine/threonine transporter SstT (416 aa).

Transmembrane regions (helical) follow at residues 15–35 (SLVS…MFMP), 49–69 (VGAL…AAII), 82–102 (ILLL…VASF), 141–161 (ALLD…GIAM), 192–212 (LGIL…ALFG), 217–237 (LVVL…LIVF), 288–308 (VSIP…ITVL), 316–336 (LGME…TISA), and 363–383 (IAMQ…SAET).

This sequence belongs to the dicarboxylate/amino acid:cation symporter (DAACS) (TC 2.A.23) family.

Its subcellular location is the cell inner membrane. The enzyme catalyses L-serine(in) + Na(+)(in) = L-serine(out) + Na(+)(out). It carries out the reaction L-threonine(in) + Na(+)(in) = L-threonine(out) + Na(+)(out). Functionally, involved in the import of serine and threonine into the cell, with the concomitant import of sodium (symport system). This is Serine/threonine transporter SstT from Aeromonas hydrophila subsp. hydrophila (strain ATCC 7966 / DSM 30187 / BCRC 13018 / CCUG 14551 / JCM 1027 / KCTC 2358 / NCIMB 9240 / NCTC 8049).